Here is a 617-residue protein sequence, read N- to C-terminus: MRLCHSIILFNSLISISICSKADDPALLVASEFKEHFNVEEKQLETVEELLIKMKKLAHSRSFKGREFGHDAVEDSKKEVAISTQQGTINKKVSPFLFEGDIFLSRRQAVDILKALSKDKTKRLRRSFVSDKTATWKTMPIKYRFHESIDFYTISQIIAAIRFWEDSTCITFENVSDSPDGDYIEFFSGQGCYSMIGRNGGRQGISIGESCVKMGVIEHEIGHALGLWHEQSRPDALGYVTIERDFILPSYISDFLQRDDEIDTLGIPYDLGSVMHYGSTAFSVDQKSKTVVTRDSLYQQTIGQREKLSFYDVATINTAYCKDECKSEKTKCENGGYMRPSKCSECLCPDGLGGEKCEKNEDSKNAECGGIIKLTEEWKEIESPNYPDPGYEADQKCSWLLKAEKGKRVEIEFIEDFSFLCTSTCVDFVELKISDDLRNTGFRFCCYDKPEISFVSQTDTAIIIFRSQLSTDIGFKIQAKSTDAEPRTTIAPTIITTTLAPITVDAPNVWADWGEWSMCSRTCGGCGIRSRVRSCRSKKCEGRRQEFGTCNLKACPVDKHCAKLLSNNRLCNGKVCTKNDIAISSCDAPQCCPPFINVDGVCQSDQENQHDELWLSI.

Positions 1 to 22 are cleaved as a signal peptide; that stretch reads MRLCHSIILFNSLISISICSKA. Positions 23–126 are excised as a propeptide; sequence DDPALLVASE…SKDKTKRLRR (104 aa). One can recognise a Peptidase M12A domain in the interval 127–322; sequence SFVSDKTATW…VATINTAYCK (196 aa). 9 cysteine pairs are disulfide-bonded: Cys-169/Cys-321, Cys-192/Cys-211, Cys-325/Cys-346, Cys-348/Cys-357, Cys-368/Cys-397, Cys-425/Cys-445, Cys-519/Cys-550, Cys-523/Cys-555, and Cys-535/Cys-540. Asn-174 is a glycosylation site (N-linked (GlcNAc...) asparagine). His-219 is a Zn(2+) binding site. Residue Glu-220 is part of the active site. Residues His-223 and His-229 each contribute to the Zn(2+) site. The 42-residue stretch at 317–358 folds into the EGF-like domain; the sequence is NTAYCKDECKSEKTKCENGGYMRPSKCSECLCPDGLGGEKCE. The region spanning 368 to 482 is the CUB domain; sequence CGGIIKLTEE…IGFKIQAKST (115 aa). One can recognise a TSP type-1 domain in the interval 507–556; sequence PNVWADWGEWSMCSRTCGGCGIRSRVRSCRSKKCEGRRQEFGTCNLKACP.

Zn(2+) is required as a cofactor. Expressed in hypodermal cells. Also detected in the hypodermal seam cells in L4 larvae and young adults. In old adult hermaphrodites, it localizes to the vulva (at protein level).

It localises to the secreted. Metalloprotease. Involved in molting, a process during larval stages in which a new cuticle is formed and the old cuticle is shed. This is Zinc metalloproteinase nas-36 (nas-36) from Caenorhabditis elegans.